Consider the following 88-residue polypeptide: Translation initiation factor IF-1 2 (88 aa).

The S1-like domain occupies methionine 1–lysine 72.

This sequence belongs to the IF-1 family. As to quaternary structure, component of the 30S ribosomal translation pre-initiation complex which assembles on the 30S ribosome in the order IF-2 and IF-3, IF-1 and N-formylmethionyl-tRNA(fMet); mRNA recruitment can occur at any time during PIC assembly.

The protein resides in the cytoplasm. One of the essential components for the initiation of protein synthesis. Stabilizes the binding of IF-2 and IF-3 on the 30S subunit to which N-formylmethionyl-tRNA(fMet) subsequently binds. Helps modulate mRNA selection, yielding the 30S pre-initiation complex (PIC). Upon addition of the 50S ribosomal subunit IF-1, IF-2 and IF-3 are released leaving the mature 70S translation initiation complex. The chain is Translation initiation factor IF-1 2 from Bordetella avium (strain 197N).